The following is a 174-amino-acid chain: Large ribosomal subunit protein uL10 (174 aa).

The protein belongs to the universal ribosomal protein uL10 family. In terms of assembly, part of the ribosomal stalk of the 50S ribosomal subunit. The N-terminus interacts with L11 and the large rRNA to form the base of the stalk. The C-terminus forms an elongated spine to which L12 dimers bind in a sequential fashion forming a multimeric L10(L12)X complex.

In terms of biological role, forms part of the ribosomal stalk, playing a central role in the interaction of the ribosome with GTP-bound translation factors. In Coxiella burnetii (strain CbuK_Q154) (Coxiella burnetii (strain Q154)), this protein is Large ribosomal subunit protein uL10.